Reading from the N-terminus, the 523-residue chain is Peptide chain release factor 3 (523 aa).

A tr-type G domain is found at 8–275 (KKRRTFAIIS…TFLEYAPEPH (268 aa)). GTP contacts are provided by residues 17–24 (SHPDAGKT), 85–89 (DTPGH), and 139–142 (NKLD).

The protein belongs to the TRAFAC class translation factor GTPase superfamily. Classic translation factor GTPase family. PrfC subfamily.

The protein localises to the cytoplasm. Functionally, increases the formation of ribosomal termination complexes and stimulates activities of RF-1 and RF-2. It binds guanine nucleotides and has strong preference for UGA stop codons. It may interact directly with the ribosome. The stimulation of RF-1 and RF-2 is significantly reduced by GTP and GDP, but not by GMP. The sequence is that of Peptide chain release factor 3 from Lactococcus lactis subsp. cremoris (strain SK11).